The sequence spans 599 residues: Adenine deaminase (599 aa).

The tract at residues 1–31 (MARSNRRGGRGDPEDDPAWAPPGHRCAGERA) is disordered.

Belongs to the metallo-dependent hydrolases superfamily. Adenine deaminase family. Mn(2+) is required as a cofactor.

It carries out the reaction adenine + H2O + H(+) = hypoxanthine + NH4(+). This is Adenine deaminase from Methanopyrus kandleri (strain AV19 / DSM 6324 / JCM 9639 / NBRC 100938).